Consider the following 334-residue polypeptide: Nucleoid-associated protein ESA_01050 (334 aa).

It belongs to the YejK family.

The protein localises to the cytoplasm. It is found in the nucleoid. This is Nucleoid-associated protein ESA_01050 from Cronobacter sakazakii (strain ATCC BAA-894) (Enterobacter sakazakii).